The primary structure comprises 250 residues: 2,3-bisphosphoglycerate-dependent phosphoglycerate mutase (250 aa).

Residues 10 to 17 (RHGESQWN), 23 to 24 (TG), arginine 62, 89 to 92 (ERHY), lysine 100, 116 to 117 (RR), and 185 to 186 (GN) each bind substrate. The Tele-phosphohistidine intermediate role is filled by histidine 11. Glutamate 89 acts as the Proton donor/acceptor in catalysis.

This sequence belongs to the phosphoglycerate mutase family. BPG-dependent PGAM subfamily. In terms of assembly, homodimer.

The catalysed reaction is (2R)-2-phosphoglycerate = (2R)-3-phosphoglycerate. Its pathway is carbohydrate degradation; glycolysis; pyruvate from D-glyceraldehyde 3-phosphate: step 3/5. Functionally, catalyzes the interconversion of 2-phosphoglycerate and 3-phosphoglycerate. This is 2,3-bisphosphoglycerate-dependent phosphoglycerate mutase from Pectobacterium atrosepticum (strain SCRI 1043 / ATCC BAA-672) (Erwinia carotovora subsp. atroseptica).